We begin with the raw amino-acid sequence, 1011 residues long: Liprin-beta-1 (1011 aa).

Ser-37 bears the Phosphoserine mark. Thr-39 bears the Phosphothreonine mark. At Ser-40 the chain carries Phosphoserine. Residues Gln-156–Leu-405 are a coiled coil. At Lys-322 the chain carries N6-acetyllysine. 2 disordered regions span residues Glu-420 to Asp-439 and Lys-463 to Gly-634. Phosphoserine is present on residues Ser-434 and Ser-466. Residues Leu-470 to Ala-492 are compositionally biased toward basic and acidic residues. Residue Lys-471 forms a Glycyl lysine isopeptide (Lys-Gly) (interchain with G-Cter in SUMO2) linkage. Ser-523 and Ser-540 each carry phosphoserine. A compositionally biased stretch (basic and acidic residues) spans Glu-546 to Asp-556. At Ser-579 the chain carries Phosphoserine. Basic residues predominate over residues Lys-584–Arg-598. Phosphoserine is present on residues Ser-601 and Ser-636. SAM domains are found at residues Trp-647–Glu-711 and Leu-719–Asn-782. Ser-794 carries the phosphoserine modification. One can recognise an SAM 3 domain in the interval Val-804–Ala-876. Residues Ser-999, Ser-1001, and Ser-1003 each carry the phosphoserine modification. The residue at position 1005 (Thr-1005) is a Phosphothreonine.

This sequence belongs to the liprin family. Liprin-beta subfamily. As to quaternary structure, forms homodimers and heterodimers. Interacts with S100A4 in a Ca(2+)-dependent mode. Part of a cortical microtubule stabilization complex (CMSC) composed of KANK1, PPFIA1, PPFIBP1, ERC1/ELKS, PHLDB2/LL5beta, CLASPs, KIF21A and possibly additional interactors; within CMSCs KANK1 and PHLDB2/LL5beta seem to be the core components for recruiting microtubule-binding proteins KIF21A and CLASPs, whereas PPFIA1, PPFIBP1 and ERC1/ELKS serve as scaffolds for protein clustering. Interacts with KANK1 (via CC1 domain, residues 244-339). Widely expressed. Absent in liver.

The protein resides in the cytoplasm. Its subcellular location is the cell cortex. Its function is as follows. May regulate the disassembly of focal adhesions. Did not bind receptor-like tyrosine phosphatases type 2A. The sequence is that of Liprin-beta-1 (PPFIBP1) from Homo sapiens (Human).